The chain runs to 494 residues: MAEIEELNDQMKVRREKMENLREAGIDPFGHKFTRTHNSQELHEAYDEKTKEELHELALSGIVAGRLMTKRGKGKVGFAHLQDREGQIQLYVRKDEVGEENYEIFKKADLGDFLGVEGEIMKTDMGELSIKAKKLTFLSKALRPLPEKFHGLTDTETRYRKRYLDLISNKESFNRFVTRSKIISEIRRYMDGRGYLEVETPVLNNEAGGAAARPFYTHHNSLDIDMALRIATELHLKRLIVGGMEKVYELGRVFRNEGMDMTHNPEFTTMESYEAYADFEDIMDLTEGIFQHVAKTVVGQDVLEYDGKEINVGGKFKRVHMVDAIKEVAGVDFWPEMTFEEATALAKEHDIHVEKHFTSVGHIINEFFEKYVEETLIQPTFVFGHPKEISPLAKMNEKDPRFTDRFELFINGKEYANAFSELNDPIDQLERFEAQAKAKELGDDEATGVDYDYVEALEHGMPPTGGLGIGIDRLVMLFTGTTSIRDVLLFPTMK.

Mg(2+)-binding residues include Glu-407 and Glu-414.

It belongs to the class-II aminoacyl-tRNA synthetase family. Homodimer. Mg(2+) is required as a cofactor.

It localises to the cytoplasm. It carries out the reaction tRNA(Lys) + L-lysine + ATP = L-lysyl-tRNA(Lys) + AMP + diphosphate. The sequence is that of Lysine--tRNA ligase from Lactococcus lactis subsp. lactis (strain IL1403) (Streptococcus lactis).